The primary structure comprises 288 residues: Diaminopimelate epimerase (288 aa).

Substrate-binding residues include asparagine 14 and asparagine 67. The Proton donor role is filled by cysteine 76. Substrate is bound by residues 77-78 (GN), asparagine 166, asparagine 199, and 217-218 (ER). Cysteine 226 acts as the Proton acceptor in catalysis. Residue 227–228 (GT) participates in substrate binding.

Belongs to the diaminopimelate epimerase family. In terms of assembly, homodimer.

Its subcellular location is the cytoplasm. The catalysed reaction is (2S,6S)-2,6-diaminopimelate = meso-2,6-diaminopimelate. Its pathway is amino-acid biosynthesis; L-lysine biosynthesis via DAP pathway; DL-2,6-diaminopimelate from LL-2,6-diaminopimelate: step 1/1. Catalyzes the stereoinversion of LL-2,6-diaminopimelate (L,L-DAP) to meso-diaminopimelate (meso-DAP), a precursor of L-lysine and an essential component of the bacterial peptidoglycan. The chain is Diaminopimelate epimerase from Bacillus anthracis (strain A0248).